Here is a 291-residue protein sequence, read N- to C-terminus: Acetyl-coenzyme A carboxylase carboxyl transferase subunit beta (291 aa).

Residues 1–23 (MSWLSKLMPSGIRTDNTPSKKRS) are disordered. In terms of domain architecture, CoA carboxyltransferase N-terminal spans 28 to 291 (LWEKCSNCGS…LGRQPAPEVA (264 aa)). 4 residues coordinate Zn(2+): Cys-32, Cys-35, Cys-51, and Cys-54. The C4-type zinc-finger motif lies at 32–54 (CSNCGSALYRPELEENLEVCPKC).

It belongs to the AccD/PCCB family. In terms of assembly, acetyl-CoA carboxylase is a heterohexamer composed of biotin carboxyl carrier protein (AccB), biotin carboxylase (AccC) and two subunits each of ACCase subunit alpha (AccA) and ACCase subunit beta (AccD). It depends on Zn(2+) as a cofactor.

The protein localises to the cytoplasm. It carries out the reaction N(6)-carboxybiotinyl-L-lysyl-[protein] + acetyl-CoA = N(6)-biotinyl-L-lysyl-[protein] + malonyl-CoA. The protein operates within lipid metabolism; malonyl-CoA biosynthesis; malonyl-CoA from acetyl-CoA: step 1/1. In terms of biological role, component of the acetyl coenzyme A carboxylase (ACC) complex. Biotin carboxylase (BC) catalyzes the carboxylation of biotin on its carrier protein (BCCP) and then the CO(2) group is transferred by the transcarboxylase to acetyl-CoA to form malonyl-CoA. This Stenotrophomonas maltophilia (strain K279a) protein is Acetyl-coenzyme A carboxylase carboxyl transferase subunit beta.